The sequence spans 259 residues: Thiazole synthase (259 aa).

Lys95 acts as the Schiff-base intermediate with DXP in catalysis. 1-deoxy-D-xylulose 5-phosphate is bound by residues Gly156, 182–183 (AG), and 204–205 (NT).

It belongs to the ThiG family. In terms of assembly, homotetramer. Forms heterodimers with either ThiH or ThiS.

It localises to the cytoplasm. The catalysed reaction is [ThiS sulfur-carrier protein]-C-terminal-Gly-aminoethanethioate + 2-iminoacetate + 1-deoxy-D-xylulose 5-phosphate = [ThiS sulfur-carrier protein]-C-terminal Gly-Gly + 2-[(2R,5Z)-2-carboxy-4-methylthiazol-5(2H)-ylidene]ethyl phosphate + 2 H2O + H(+). It functions in the pathway cofactor biosynthesis; thiamine diphosphate biosynthesis. Functionally, catalyzes the rearrangement of 1-deoxy-D-xylulose 5-phosphate (DXP) to produce the thiazole phosphate moiety of thiamine. Sulfur is provided by the thiocarboxylate moiety of the carrier protein ThiS. In vitro, sulfur can be provided by H(2)S. The chain is Thiazole synthase from Serratia proteamaculans (strain 568).